The primary structure comprises 249 residues: 3-deoxy-manno-octulosonate cytidylyltransferase (249 aa).

Belongs to the KdsB family.

Its subcellular location is the cytoplasm. It catalyses the reaction 3-deoxy-alpha-D-manno-oct-2-ulosonate + CTP = CMP-3-deoxy-beta-D-manno-octulosonate + diphosphate. Its pathway is nucleotide-sugar biosynthesis; CMP-3-deoxy-D-manno-octulosonate biosynthesis; CMP-3-deoxy-D-manno-octulosonate from 3-deoxy-D-manno-octulosonate and CTP: step 1/1. It participates in bacterial outer membrane biogenesis; lipopolysaccharide biosynthesis. Functionally, activates KDO (a required 8-carbon sugar) for incorporation into bacterial lipopolysaccharide in Gram-negative bacteria. The polypeptide is 3-deoxy-manno-octulosonate cytidylyltransferase (Coxiella burnetii (strain CbuG_Q212) (Coxiella burnetii (strain Q212))).